The chain runs to 302 residues: RNA polymerase II holoenzyme cyclin-like subunit (302 aa).

The Cyclin N-terminal domain occupies 53 to 142 (QQLIKLGKRM…LGECEFSLIS (90 aa)).

Belongs to the cyclin family. Cyclin C subfamily. Component of the srb8-11 complex, a regulatory module of the Mediator complex.

The protein resides in the nucleus. Functionally, component of the srb8-11 complex. The srb8-11 complex is a regulatory module of the Mediator complex which is itself involved in regulation of basal and activated RNA polymerase II-dependent transcription. The srb8-11 complex may be involved in the transcriptional repression of a subset of genes regulated by Mediator. It may inhibit the association of the Mediator complex with RNA polymerase II to form the holoenzyme complex. The srb8-11 complex phosphorylates the C-terminal domain (CTD) of the largest subunit of RNA polymerase II. This Aspergillus fumigatus (strain ATCC MYA-4609 / CBS 101355 / FGSC A1100 / Af293) (Neosartorya fumigata) protein is RNA polymerase II holoenzyme cyclin-like subunit (ssn8).